We begin with the raw amino-acid sequence, 590 residues long: Proline--tRNA ligase (590 aa).

This sequence belongs to the class-II aminoacyl-tRNA synthetase family. ProS type 1 subfamily. As to quaternary structure, homodimer.

It is found in the cytoplasm. It carries out the reaction tRNA(Pro) + L-proline + ATP = L-prolyl-tRNA(Pro) + AMP + diphosphate. Its function is as follows. Catalyzes the attachment of proline to tRNA(Pro) in a two-step reaction: proline is first activated by ATP to form Pro-AMP and then transferred to the acceptor end of tRNA(Pro). As ProRS can inadvertently accommodate and process non-cognate amino acids such as alanine and cysteine, to avoid such errors it has two additional distinct editing activities against alanine. One activity is designated as 'pretransfer' editing and involves the tRNA(Pro)-independent hydrolysis of activated Ala-AMP. The other activity is designated 'posttransfer' editing and involves deacylation of mischarged Ala-tRNA(Pro). The misacylated Cys-tRNA(Pro) is not edited by ProRS. This chain is Proline--tRNA ligase, found in Leifsonia xyli subsp. xyli (strain CTCB07).